The primary structure comprises 316 residues: Ribosomal RNA small subunit methyltransferase H (316 aa).

S-adenosyl-L-methionine-binding positions include 35-37, aspartate 55, phenylalanine 84, aspartate 105, and glutamine 112; that span reads SGH.

It belongs to the methyltransferase superfamily. RsmH family.

The protein resides in the cytoplasm. The enzyme catalyses cytidine(1402) in 16S rRNA + S-adenosyl-L-methionine = N(4)-methylcytidine(1402) in 16S rRNA + S-adenosyl-L-homocysteine + H(+). Functionally, specifically methylates the N4 position of cytidine in position 1402 (C1402) of 16S rRNA. The polypeptide is Ribosomal RNA small subunit methyltransferase H (Streptococcus equi subsp. zooepidemicus (strain MGCS10565)).